Consider the following 258-residue polypeptide: Ribosomal RNA small subunit methyltransferase J (258 aa).

S-adenosyl-L-methionine contacts are provided by residues 106–107, 122–123, and Asp-181; these read RD and ER.

This sequence belongs to the methyltransferase superfamily. RsmJ family.

It is found in the cytoplasm. The enzyme catalyses guanosine(1516) in 16S rRNA + S-adenosyl-L-methionine = N(2)-methylguanosine(1516) in 16S rRNA + S-adenosyl-L-homocysteine + H(+). Functionally, specifically methylates the guanosine in position 1516 of 16S rRNA. This Pseudoalteromonas atlantica (strain T6c / ATCC BAA-1087) protein is Ribosomal RNA small subunit methyltransferase J.